We begin with the raw amino-acid sequence, 452 residues long: PTS system N-acetylglucosamine-specific EIICB component (452 aa).

Residues 1–361 (MLSFLQKLGK…LNLKTPGRED (361 aa)) enclose the PTS EIIC type-1 domain. Helical transmembrane passes span 8–28 (LGKS…ILAL), 42–62 (AGTA…AIGI), 91–111 (TNNM…YTYN), 130–150 (LVPI…GVVW), 163–183 (WMLG…RLLI), 223–243 (MTGF…AMVV), 257–277 (MIGF…EFAF), 279–299 (FLSP…LFIV), and 329–349 (LLLL…YVLI). Residues 375-452 (DVNENIMLKG…AAEELRAAVK (78 aa)) enclose the PTS EIIB type-1 domain. Cysteine 397 (phosphocysteine intermediate; for EIIB activity) is an active-site residue.

In terms of assembly, interacts with FloT.

Its subcellular location is the cell membrane. It is found in the membrane raft. The catalysed reaction is N(pros)-phospho-L-histidyl-[protein] + N-acetyl-D-glucosamine(out) = N-acetyl-D-glucosamine 6-phosphate(in) + L-histidyl-[protein]. Functionally, the phosphoenolpyruvate-dependent sugar phosphotransferase system (sugar PTS), a major carbohydrate active -transport system, catalyzes the phosphorylation of incoming sugar substrates concomitantly with their translocation across the cell membrane. This system is involved in N-acetylglucosamine transport. This Bacillus subtilis (strain 168) protein is PTS system N-acetylglucosamine-specific EIICB component (nagP).